Reading from the N-terminus, the 284-residue chain is Efem/EfeO family lipoprotein (284 aa).

Positions 1–17 (MKKLTTLLLASTLLIAA) are cleaved as a signal peptide. A lipid anchor (N-palmitoyl cysteine) is attached at cysteine 18. Residue cysteine 18 is the site of S-diacylglycerol cysteine attachment.

Belongs to the EfeM/EfeO family.

The protein resides in the cell membrane. The polypeptide is Efem/EfeO family lipoprotein (Staphylococcus aureus (strain USA300)).